We begin with the raw amino-acid sequence, 445 residues long: Eukaryotic peptide chain release factor subunit 1 (445 aa).

It belongs to the eukaryotic release factor 1 family. In terms of assembly, heterodimer of two subunits, one of which binds GTP.

The protein localises to the cytoplasm. In terms of biological role, directs the termination of nascent peptide synthesis (translation) in response to the termination codon UGA. In Stylonchia UAA and UAG codes for glutamine. The polypeptide is Eukaryotic peptide chain release factor subunit 1 (ERF1) (Stylonychia mytilus (Ciliate)).